The primary structure comprises 541 residues: Arginine-containing cyclodipeptide synthase avaA (541 aa).

The Conserved DDXXE motif motif lies at 428-432 (DDIAE).

This sequence belongs to the arginine-containing cyclodipeptide synthase family.

It carries out the reaction L-tryptophyl-tRNA(Trp) + L-arginyl-tRNA(Arg) = cyclo(L-arginyl-L-tryptophyl) + tRNA(Trp) + tRNA(Arg) + H(+). It participates in secondary metabolite biosynthesis. Its function is as follows. Arginine-containing cyclodipeptide synthase; part of the cluster that mediates the biosynthesis of a highly modified cyclo-arginine-tryptophan dipeptide (cRW). Within the pathway, avaA acts as the scaffold-generating enzyme and is responsible for formation of the cyclo-Arg-Trp diketopiperazine (cRW) from L-arginyl-tRNA(Arg) + L-tryptophanyl-tRNA(Trp). AvaB then acts as a multifunctional flavoenzyme that is responsible for generating the cyclo-Arg-formylkynurenine DKP, which can be deformylated by avaC. AvaB then catalyzes an additional N-oxidation followed by cyclization and dehydration. The next step is an N-acetylation of the guanidine group catalyzed by the arginine N-acetyltransferase AvaD. The role of the additional enzymes identified within the ava cluster still have to be determined. This chain is Arginine-containing cyclodipeptide synthase avaA, found in Aspergillus versicolor.